The following is a 283-amino-acid chain: 2-hydroxy-6-oxononadienedioate/2-hydroxy-6-oxononatrienedioate hydrolase (283 aa).

Positions 35 to 269 (VVVMFHGSGP…KCGHWAQWEH (235 aa)) constitute an AB hydrolase-1 domain. The Proton acceptor role is filled by H263.

The protein belongs to the AB hydrolase superfamily. MhpC family. As to quaternary structure, homodimer.

The enzyme catalyses (2Z,4E)-2-hydroxy-6-oxonona-2,4-dienedioate + H2O = (2Z)-2-hydroxypenta-2,4-dienoate + succinate + H(+). The catalysed reaction is (2Z,4E,7E)-2-hydroxy-6-oxonona-2,4,7-trienedioate + H2O = (2Z)-2-hydroxypenta-2,4-dienoate + fumarate + H(+). It functions in the pathway aromatic compound metabolism; 3-phenylpropanoate degradation. Its function is as follows. Catalyzes the cleavage of the C5-C6 bond of 2-hydroxy-6-oxononadienedioate and 2-hydroxy-6-oxononatrienedioate, a dienol ring fission product of the bacterial meta-cleavage pathway for degradation of phenylpropionic acid. The sequence is that of 2-hydroxy-6-oxononadienedioate/2-hydroxy-6-oxononatrienedioate hydrolase from Pseudomonas sp.